Here is a 419-residue protein sequence, read N- to C-terminus: MSAAASFKSEFLQTLQARGYIHQITHPDELDAAAAGGIVTAYIGFDATAPSLHVGSLIQIMMLRRLQQAGHKPIVLMGGGTTKVGDPTGKDESRKLLSDADIAANIAGIKQVFAKFLTFGDGPTDAIMVDNDVWLSKFGYVQFLRDYGVHFTVNRMLAFDSVKLRLEREQPMTFLEFNYMLMQAVDFLELNRAHGCVLQMGGSDQWGNILNGVELTRRVDHKAAFGLTTPLLATASGAKMGKTMSGAVWLNAEQLSPYDYWQFWRNTEDADVGRFLKLFTDLPLDEIARLEALPGAQINDAKKVLADEATRMAHGEDEARKARDAAEKAFEQGALSADLPTFEIAAAELKAGIVLANLFADAGLAASRGEARRLAQGGGVKVNDKAEPDANRVVTEADLVEGVVKLAAGKKKIVLVKPI.

Residue Y42 coordinates L-tyrosine. A 'HIGH' region motif is present at residues 47–56 (ATAPSLHVGS). The L-tyrosine site is built by Y179 and Q183. Positions 239–243 (KMGKT) match the 'KMSKS' region motif. K242 contributes to the ATP binding site. An S4 RNA-binding domain is found at 353 to 418 (IVLANLFADA…GKKKIVLVKP (66 aa)).

This sequence belongs to the class-I aminoacyl-tRNA synthetase family. TyrS type 1 subfamily. Homodimer.

The protein localises to the cytoplasm. It carries out the reaction tRNA(Tyr) + L-tyrosine + ATP = L-tyrosyl-tRNA(Tyr) + AMP + diphosphate + H(+). Functionally, catalyzes the attachment of tyrosine to tRNA(Tyr) in a two-step reaction: tyrosine is first activated by ATP to form Tyr-AMP and then transferred to the acceptor end of tRNA(Tyr). The chain is Tyrosine--tRNA ligase from Caulobacter sp. (strain K31).